A 516-amino-acid chain; its full sequence is Probable cytochrome P450 9f2 (516 aa).

Residue C460 coordinates heme.

Belongs to the cytochrome P450 family. Heme serves as cofactor.

Its subcellular location is the endoplasmic reticulum membrane. The protein resides in the microsome membrane. May be involved in the metabolism of insect hormones and in the breakdown of synthetic insecticides. The sequence is that of Probable cytochrome P450 9f2 (Cyp9f2) from Drosophila melanogaster (Fruit fly).